Here is a 787-residue protein sequence, read N- to C-terminus: Pyridoxal-dependent decarboxylase domain-containing protein 1 (787 aa).

Basic and acidic residues predominate over residues 29–41; the sequence is EDSQRRTEEENGK. Residues 29 to 52 are disordered; the sequence is EDSQRRTEEENGKKLLSGDIPGPL. At Ser-653 the chain carries Phosphoserine. The disordered stretch occupies residues 683-787; the sequence is QGSGVTPPQT…PQVEEPESLR (105 aa). Residues 685–697 are compositionally biased toward polar residues; sequence SGVTPPQTPTGTR. A phosphothreonine mark is found at Thr-688 and Thr-692. Phosphoserine is present on residues Ser-711, Ser-719, and Ser-723. Positions 735-745 are enriched in polar residues; that stretch reads QSSGGQEASEA. Phosphoserine occurs at positions 747 and 785. Basic and acidic residues predominate over residues 774 to 787; that stretch reads QDDRPQVEEPESLR.

It belongs to the group II decarboxylase family. Requires pyridoxal 5'-phosphate as cofactor.

The sequence is that of Pyridoxal-dependent decarboxylase domain-containing protein 1 (PDXDC1) from Bos taurus (Bovine).